A 374-amino-acid chain; its full sequence is Protein RecA (374 aa).

66–73 contributes to the ATP binding site; that stretch reads GPESSGKT. The disordered stretch occupies residues 326–374; the sequence is KLGVGVHPEESATEPGADAASAAPADAAPAVPAPTTAKATKSKATAAKS. The span at 338–374 shows a compositional bias: low complexity; sequence TEPGADAASAAPADAAPAVPAPTTAKATKSKATAAKS.

The protein belongs to the RecA family.

It localises to the cytoplasm. Its function is as follows. Can catalyze the hydrolysis of ATP in the presence of single-stranded DNA, the ATP-dependent uptake of single-stranded DNA by duplex DNA, and the ATP-dependent hybridization of homologous single-stranded DNAs. It interacts with LexA causing its activation and leading to its autocatalytic cleavage. This Streptomyces coelicolor (strain ATCC BAA-471 / A3(2) / M145) protein is Protein RecA.